The sequence spans 227 residues: Uracil-DNA glycosylase (227 aa).

Catalysis depends on Asp64, which acts as the Proton acceptor.

The protein belongs to the uracil-DNA glycosylase (UDG) superfamily. UNG family.

The protein resides in the cytoplasm. It catalyses the reaction Hydrolyzes single-stranded DNA or mismatched double-stranded DNA and polynucleotides, releasing free uracil.. In terms of biological role, excises uracil residues from the DNA which can arise as a result of misincorporation of dUMP residues by DNA polymerase or due to deamination of cytosine. The polypeptide is Uracil-DNA glycosylase (Serratia proteamaculans (strain 568)).